The sequence spans 613 residues: Serine protease FAM111A (613 aa).

The segment at 1–72 (MSCKKRKSQI…TRQDQTPPLN (72 aa)) is disordered. Lys19 is covalently cross-linked (Glycyl lysine isopeptide (Lys-Gly) (interchain with G-Cter in SUMO2)). Ser25 is modified (phosphoserine). A Glycyl lysine isopeptide (Lys-Gly) (interchain with G-Cter in SUMO2) cross-link involves residue Lys29. Residues 40–56 (VDSKKMPRDITNTRDQR) show a composition bias toward basic and acidic residues. Lys62 participates in a covalent cross-link: Glycyl lysine isopeptide (Lys-Gly) (interchain with G-Cter in SUMO2). Catalysis depends on charge relay system residues His383, Asp437, and Ser543.

Belongs to the FAM111 family. Interacts (via PIP-box) with PCNA; this interaction is direct. Autocatalytically cleaved; autocatalytic cleavage takes place in trans.

It is found in the nucleus. It localises to the chromosome. The protein localises to the cytoplasm. In terms of biological role, single-stranded DNA-binding serine protease that mediates the proteolytic cleavage of covalent DNA-protein cross-links (DPCs) during DNA synthesis, thereby playing a key role in maintaining genomic integrity. DPCs are highly toxic DNA lesions that interfere with essential chromatin transactions, such as replication and transcription, and which are induced by reactive agents, such as UV light or formaldehyde. Protects replication fork from stalling by removing DPCs, such as covalently trapped topoisomerase 1 (TOP1) adducts on DNA lesion, or poly(ADP-ribose) polymerase 1 (PARP1)-DNA complexes trapped by PARP inhibitors. Required for PCNA loading on replication sites. Promotes S-phase entry and DNA synthesis. The polypeptide is Serine protease FAM111A (Mus musculus (Mouse)).